The chain runs to 492 residues: Nuclear autoantigenic sperm protein homolog (492 aa).

A compositionally biased stretch (low complexity) spans 1 to 14 (MSAEAEAIVTTATA). 2 disordered regions span residues 1–52 (MSAE…EQER) and 123–254 (DVPD…EEGV). Phosphothreonine is present on residues Thr32 and Thr33. A compositionally biased stretch (acidic residues) spans 124–145 (VPDEAADDDDEDVDDDEEESAE). 2 stretches are compositionally biased toward basic and acidic residues: residues 147–159 (GAAK…DTKE) and 170–179 (KELDTIKEGS). Ser179 and Ser184 each carry phosphoserine. Phosphothreonine is present on Thr185. Ser193 carries the post-translational modification Phosphoserine. The segment covering 226-238 (STSNGEVTASCSN) has biased composition (polar residues). Residues 244-253 (VEEEPEEEEG) are compositionally biased toward acidic residues. 2 TPR repeats span residues 284–317 (AEVQ…HGEL) and 326–359 (AELH…IEEE). Residues 377 to 400 (MLDLEETKQEILAKIQEIEEMQAQ) adopt a coiled-coil conformation. Over residues 418–459 (SGDAAAASSSSSSSANGAASSSSSSSKGAAAASSSTISSSSA) the composition is skewed to low complexity. The disordered stretch occupies residues 418–492 (SGDAAAASSS…LCSPAKRAAV (75 aa)). A phosphoserine mark is found at Ser478 and Ser485.

Belongs to the NASP family. In terms of assembly, interacts with the histone H3-H4 heterodimer; the interaction with H4 is probably indirect and mediated by H3 (His3, His3.3A and His3.3B). Interacts with His2Av; this interaction directly or indirectly destabilizes His2Av.

The protein resides in the cytoplasm. It is found in the nucleus. It localises to the perinuclear region. Component of the histone chaperone network. Binds and stabilizes histone H3-H4 not bound to chromatin to maintain a soluble reservoir and modulate degradation by chaperone-mediated autophagy. May also bind and stabilize monomeric H3. Maternal effect gene essential for early embryogenesis. The chain is Nuclear autoantigenic sperm protein homolog from Drosophila melanogaster (Fruit fly).